We begin with the raw amino-acid sequence, 347 residues long: Rhodopsin (347 aa).

Over 1 to 33 (TEGPDFYIPMVNTTGVVRSPYEYPQYYLVNPAA) the chain is Extracellular. Asparagine 12 carries N-linked (GlcNAc...) asparagine glycosylation. Residues 34 to 58 (YAVLGAYMFFLIIVGFPINFLTLYV) form a helical membrane-spanning segment. Residues 59 to 70 (TLEHKKLRTPLN) lie on the Cytoplasmic side of the membrane. Residues 71–93 (YILLNLAVADLFMVIGGFTTTMY) form a helical membrane-spanning segment. Residues 94-107 (SSMHGYFVLGRLGC) lie on the Extracellular side of the membrane. Cysteine 107 and cysteine 184 are disulfide-bonded. Residues 108 to 130 (NIEGFFATLGGMISLWSLAVLAI) traverse the membrane as a helical segment. The short motif at 131–133 (ERW) is the 'Ionic lock' involved in activated form stabilization element. Over 131 to 149 (ERWVVVCKPISNFRFGENH) the chain is Cytoplasmic. A helical transmembrane segment spans residues 150–170 (AIMGVSLTWVMALACTVPPLV). Residues 171-199 (GWSRYIPEGMQCACGIDYYTRAEGYNNES) lie on the Extracellular side of the membrane. A glycan (N-linked (GlcNAc...) asparagine) is linked at asparagine 197. The chain crosses the membrane as a helical span at residues 200–221 (FVIYMFTFHFLFPMFIIFFCYG). Topologically, residues 222-249 (RLLCAVKEAAAAQQESETTQRAEREVTR) are cytoplasmic. The chain crosses the membrane as a helical span at residues 250 to 271 (MVILMVIGYLVCWLPYASVAWF). Topologically, residues 272-283 (IFTHKGSEFGPL) are extracellular. A helical membrane pass occupies residues 284–305 (FMAVPSFFAKSSSIYNPIIYIC). The residue at position 293 (lysine 293) is an N6-(retinylidene)lysine. Residues 306-347 (MNKQFRQCMITTLFCGKNPFEGQEEDSSTKTEASSASSVSPA) are Cytoplasmic-facing. Cysteine 320 is lipidated: S-palmitoyl cysteine. A disordered region spans residues 326–347 (EGQEEDSSTKTEASSASSVSPA). Residues 335–347 (KTEASSASSVSPA) show a composition bias toward low complexity.

It belongs to the G-protein coupled receptor 1 family. Opsin subfamily. In terms of processing, phosphorylated on some or all of the serine and threonine residues present in the C-terminal region. Post-translationally, contains one covalently linked retinal chromophore.

It localises to the membrane. Its subcellular location is the cell projection. The protein resides in the cilium. It is found in the photoreceptor outer segment. Its function is as follows. Photoreceptor required for image-forming vision at low light intensity. While most salt water fish species use retinal as chromophore, most freshwater fish use 3-dehydroretinal, or a mixture of retinal and 3-dehydroretinal. Light-induced isomerization of 11-cis to all-trans retinal triggers a conformational change that activates signaling via G-proteins. Subsequent receptor phosphorylation mediates displacement of the bound G-protein alpha subunit by arrestin and terminates signaling. This Sargocentron spiniferum (Sabre squirrelfish) protein is Rhodopsin (rho).